A 317-amino-acid chain; its full sequence is tRNA dimethylallyltransferase (317 aa).

14 to 21 (GPTAVGKT) contributes to the ATP binding site. Residue 16–21 (TAVGKT) coordinates substrate. An interaction with substrate tRNA region spans residues 39–42 (DSMQ).

The protein belongs to the IPP transferase family. Monomer. Mg(2+) serves as cofactor.

It carries out the reaction adenosine(37) in tRNA + dimethylallyl diphosphate = N(6)-dimethylallyladenosine(37) in tRNA + diphosphate. Functionally, catalyzes the transfer of a dimethylallyl group onto the adenine at position 37 in tRNAs that read codons beginning with uridine, leading to the formation of N6-(dimethylallyl)adenosine (i(6)A). In Bacillus cereus (strain G9842), this protein is tRNA dimethylallyltransferase.